We begin with the raw amino-acid sequence, 133 residues long: Small ribosomal subunit protein uS9 (133 aa).

Positions 98–113 (RKPLKTEGHLSRDPRA) are enriched in basic and acidic residues. The interval 98–133 (RKPLKTEGHLSRDPRAKERRKYGLKKARKAPQFSKR) is disordered. Basic residues predominate over residues 114–133 (KERRKYGLKKARKAPQFSKR).

The protein belongs to the universal ribosomal protein uS9 family.

The polypeptide is Small ribosomal subunit protein uS9 (Parasynechococcus marenigrum (strain WH8102)).